We begin with the raw amino-acid sequence, 643 residues long: Probable potassium transport system protein Kup (643 aa).

The span at 1–12 shows a compositional bias: basic and acidic residues; it reads MSISSKTEDSDI. The segment at 1–20 is disordered; sequence MSISSKTEDSDIRSSVMTDH. A run of 12 helical transmembrane segments spans residues 28 to 48, 65 to 85, 121 to 141, 158 to 178, 187 to 207, 224 to 244, 268 to 288, 301 to 321, 358 to 378, 384 to 404, 415 to 435, and 440 to 460; these read LAGLSLAALGVVFGDIGTSPL, AGNVLGVLSLLFWALVLIVGL, WLLVAIGLFGASLLYGDGMIT, PAFHEMVIPLTMLVLAGLFLF, GALFGPIILLWFIAIAILGII, GISFLLGNNLKGFTVLGAVFL, WFLLVLPALLLNYFGQGALLL, LVPSWAMIPMVLLATSATIIA, IYVPAANWSLMVGTIGIVAWF, LAAAYGVAVTATMLISTILFY, PAALNVMITFFAAIDLSFFGA, and LFHGAWVPLAVALVMFTIMNT.

Belongs to the HAK/KUP transporter (TC 2.A.72) family.

Its subcellular location is the cell inner membrane. It catalyses the reaction K(+)(in) + H(+)(in) = K(+)(out) + H(+)(out). Transport of potassium into the cell. Likely operates as a K(+):H(+) symporter. In Chlorobium luteolum (strain DSM 273 / BCRC 81028 / 2530) (Pelodictyon luteolum), this protein is Probable potassium transport system protein Kup.